Consider the following 93-residue polypeptide: Cell division topological specificity factor (93 aa).

This sequence belongs to the MinE family.

Prevents the cell division inhibition by proteins MinC and MinD at internal division sites while permitting inhibition at polar sites. This ensures cell division at the proper site by restricting the formation of a division septum at the midpoint of the long axis of the cell. This chain is Cell division topological specificity factor, found in Syntrophus aciditrophicus (strain SB).